A 300-amino-acid polypeptide reads, in one-letter code: Acetaldehyde dehydrogenase 3 (300 aa).

11–14 is an NAD(+) binding site; that stretch reads SGNI. C126 functions as the Acyl-thioester intermediate in the catalytic mechanism. NAD(+) contacts are provided by residues 157–165 and N276; that span reads SAGPGTRAN.

Belongs to the acetaldehyde dehydrogenase family.

It catalyses the reaction acetaldehyde + NAD(+) + CoA = acetyl-CoA + NADH + H(+). The sequence is that of Acetaldehyde dehydrogenase 3 from Rhodococcus opacus (strain B4).